We begin with the raw amino-acid sequence, 707 residues long: Leucine-rich repeat neuronal protein 3 (707 aa).

An N-terminal signal peptide occupies residues 1–22; sequence MKDTPLQVHVLLGLAITTLVQA. An LRRNT domain is found at 23–69; that stretch reads IDKKVDCPQLCTCEIRPWFTPRSIYMEASTVDCNDLGLLNFPARLPA. The Extracellular segment spans residues 23 to 626; sequence IDKKVDCPQL…DGKEYGKNHT (604 aa). 12 LRR repeats span residues 70–91, 93–114, 117–138, 141–162, 165–186, 189–210, 213–234, 237–258, 261–282, 285–304, 310–332, and 335–358; these read DTQILLLQTNNIARIEHSTDFP, NLTGLDLSQNNLSSVTNINVQK, QLLSVYLEENKLTELPEKCLYG, NLQELYVNHNLLSTISPGAFIG, NLLRLHLNSNRLQMINSQWFDA, NLEILMLGDNPIIRIKDMNFQP, KLRSLVIAGINLTEIPDDALAG, NLESISFYDNRLSKVPQVALQK, NLKFLDLNKNPINRIRRGDFSN, HLKELGINNMPELVSIDSLA, DLRKIEATNNPRLSYIHPNAFFR, and KLESLMLNTNALSALYHGTIESLP. Asn-93 and Asn-103 each carry an N-linked (GlcNAc...) asparagine glycan. A glycan (N-linked (GlcNAc...) asparagine) is linked at Asn-223. Positions 368-421 constitute an LRRCT domain; the sequence is NPIRCDCVIRWINMNKTNIRFMEPDSLFCVDPPEFQGQNVRQVHFRDMMEICLP. Asn-382 carries an N-linked (GlcNAc...) asparagine glycan. Residues 421–514 form the Ig-like C2-type domain; the sequence is PLIAPESFPS…DLKSIMIKVG (94 aa). A disulfide bond links Cys-444 and Cys-496. N-linked (GlcNAc...) asparagine glycans are attached at residues Asn-522, Asn-579, Asn-608, and Asn-624. In terms of domain architecture, Fibronectin type-III spans 523–614; that stretch reads GSLNIKIRDI…QCVNVTTKSL (92 aa). A helical transmembrane segment spans residues 627 to 647; it reads VFVACVGGLLGIIGVMCLFSC. The Cytoplasmic portion of the chain corresponds to 648-707; it reads VSQEGSSEGEHSYAVNHCHKPALAFSELYPPLINLWESSKEKRATLEVKATAIGVPTNMS.

In terms of tissue distribution, expressed in the brain, in Stronger expression in the ventricular zone and anlage of thalamus, spinal cord, and dorsal root ganglion in 11-17 dpc cerebellum and cerebral cortex in adults.

The protein resides in the membrane. In Mus musculus (Mouse), this protein is Leucine-rich repeat neuronal protein 3 (Lrrn3).